An 844-amino-acid polypeptide reads, in one-letter code: DNA mismatch repair protein MutS (844 aa).

602–609 lines the ATP pocket; that stretch reads GPNMSGKS.

This sequence belongs to the DNA mismatch repair MutS family.

This protein is involved in the repair of mismatches in DNA. It is possible that it carries out the mismatch recognition step. This protein has a weak ATPase activity. This is DNA mismatch repair protein MutS from Streptococcus pneumoniae serotype 19F (strain G54).